The sequence spans 444 residues: ATP-dependent protease ATPase subunit HslU (444 aa).

Residues isoleucine 18, 60–65, aspartate 256, glutamate 322, and arginine 394 contribute to the ATP site; that span reads GVGKTE.

This sequence belongs to the ClpX chaperone family. HslU subfamily. In terms of assembly, a double ring-shaped homohexamer of HslV is capped on each side by a ring-shaped HslU homohexamer. The assembly of the HslU/HslV complex is dependent on binding of ATP.

It is found in the cytoplasm. In terms of biological role, ATPase subunit of a proteasome-like degradation complex; this subunit has chaperone activity. The binding of ATP and its subsequent hydrolysis by HslU are essential for unfolding of protein substrates subsequently hydrolyzed by HslV. HslU recognizes the N-terminal part of its protein substrates and unfolds these before they are guided to HslV for hydrolysis. The polypeptide is ATP-dependent protease ATPase subunit HslU (Klebsiella pneumoniae (strain 342)).